Consider the following 171-residue polypeptide: Transcriptional repressor NrdR (171 aa).

The segment covering 1–10 (MQCPHCHHNG) has biased composition (basic residues). The segment at 1 to 21 (MQCPHCHHNGSRVVDSRPTDD) is disordered. Residues 3-34 (CPHCHHNGSRVVDSRPTDDGRVIRRRRECENC) fold into a zinc finger. Residues 49–139 (LLVIKKNGAR…VYRQFKDMHV (91 aa)) enclose the ATP-cone domain. The tract at residues 152 to 171 (KVKLAKPSAKTTHAPKRKKD) is disordered.

This sequence belongs to the NrdR family. Zn(2+) serves as cofactor.

Functionally, negatively regulates transcription of bacterial ribonucleotide reductase nrd genes and operons by binding to NrdR-boxes. This chain is Transcriptional repressor NrdR, found in Lactiplantibacillus plantarum (strain ATCC BAA-793 / NCIMB 8826 / WCFS1) (Lactobacillus plantarum).